We begin with the raw amino-acid sequence, 339 residues long: HTH-type transcriptional regulator PtxS (339 aa).

Residues 12–67 enclose the HTH lacI-type domain; sequence VTISEVARVAGVSKATVSRYIGGDRQLLAEATAKRLEEVIERLGYRPNQMARGLKR. Residues 14–33 constitute a DNA-binding region (H-T-H motif); sequence ISEVARVAGVSKATVSRYIG.

As to quaternary structure, homodimer in solution.

2-ketogluconate acts as a molecular effector and causes dissociation of PtxS from its target promoter. Negatively regulates glucose metabolism by binding directly to the promoter region of the kgu and gad operons. It also negatively regulates its own synthesis. In Pseudomonas putida (strain ATCC 47054 / DSM 6125 / CFBP 8728 / NCIMB 11950 / KT2440), this protein is HTH-type transcriptional regulator PtxS.